The sequence spans 197 residues: ATP-dependent Clp protease proteolytic subunit (197 aa).

Ser-102 serves as the catalytic Nucleophile. His-127 is an active-site residue.

This sequence belongs to the peptidase S14 family. As to quaternary structure, fourteen ClpP subunits assemble into 2 heptameric rings which stack back to back to give a disk-like structure with a central cavity, resembling the structure of eukaryotic proteasomes.

The protein resides in the cytoplasm. The enzyme catalyses Hydrolysis of proteins to small peptides in the presence of ATP and magnesium. alpha-casein is the usual test substrate. In the absence of ATP, only oligopeptides shorter than five residues are hydrolyzed (such as succinyl-Leu-Tyr-|-NHMec, and Leu-Tyr-Leu-|-Tyr-Trp, in which cleavage of the -Tyr-|-Leu- and -Tyr-|-Trp bonds also occurs).. Cleaves peptides in various proteins in a process that requires ATP hydrolysis. Has a chymotrypsin-like activity. Plays a major role in the degradation of misfolded proteins. This chain is ATP-dependent Clp protease proteolytic subunit, found in Borreliella afzelii (strain PKo) (Borrelia afzelii).